A 368-amino-acid chain; its full sequence is MFSGLHTSKYACQVVVQIRTATKRAAGSRTSMKDSAGRRLGPKKYEGQDVKPGEIIMRQRGTKFYPGENVKIGRDHTIYAVEPGVVRYYLDPFHPYRKFIGVALSRDMKLPKPHFEPNVRRFGRIELDNPKAIAKEENALSRKEYLSRDTLLKDLTEREAKRHEMMDNYWNFISSELKLNIIPERKEMASNYLLRYRTGLKNGFDLQEAQFNAKYYLQQMLKLKAKRKEWNEEKLSEQLHNLDETTALLNKSVSFSNKWVIIPYISEEEKLTRKDELIKKLTELGTAIKSKSDKKAVLELFKDASHFLTQAQEVRLRRQFMKPVQPEIMNVNVAEKADKKTTVIRRFNYEKSKIDIIPRTKTAFFKRL.

The N-terminal 20 residues, 1–20 (MFSGLHTSKYACQVVVQIRT), are a transit peptide targeting the mitochondrion. The tract at residues 23–44 (KRAAGSRTSMKDSAGRRLGPKK) is disordered. Residues 31-44 (SMKDSAGRRLGPKK) show a composition bias toward basic and acidic residues.

The protein belongs to the bacterial ribosomal protein bL27 family.

Its subcellular location is the mitochondrion. Functionally, component of the large subunit of mitochondrial ribosome. The protein is Large ribosomal subunit protein bL27m (MRPL2) of Candida glabrata (strain ATCC 2001 / BCRC 20586 / JCM 3761 / NBRC 0622 / NRRL Y-65 / CBS 138) (Yeast).